The chain runs to 1703 residues: Ferlin 2 (1703 aa).

C2 domains lie at 18-141 (IRKL…KTWL) and 207-332 (KQPV…FRWF). 3 disordered regions span residues 913 to 937 (NQFNDDDEGDNEDEQDSRENDFDDN), 970 to 1025 (NLDK…TSST), and 1194 to 1228 (KNKSNRSSMSLSMRSSIQSNTFKSSRKTSRSQKLG). Residues 916–928 (NDDDEGDNEDEQD) are compositionally biased toward acidic residues. The segment covering 979–991 (QPQSLKNLQNLDS) has biased composition (polar residues). Basic and acidic residues predominate over residues 993–1009 (SKADQKSQFDLKSESKS). A compositionally biased stretch (low complexity) spans 1198 to 1209 (NRSSMSLSMRSS). Residues 1466 to 1595 (VARIIPPSTI…LKKLKEGIVF (130 aa)) form the C2 3 domain. Residues 1628 to 1651 (AAESDPVGEGQNEPNKDPILEKPK) form a disordered region. Over residues 1641–1651 (PNKDPILEKPK) the composition is skewed to basic and acidic residues. The chain crosses the membrane as a helical span at residues 1681–1701 (FAGIFVSIVTMMILFVKPGIL).

The protein belongs to the ferlin family.

Its subcellular location is the membrane. Functionally, regulates mucocyst exocytosis. The polypeptide is Ferlin 2 (Tetrahymena thermophila (strain SB210)).